The primary structure comprises 483 residues: Rhamnulokinase (483 aa).

Position 11–15 (11–15) interacts with ATP; the sequence is ASSGR. Residues Gly79 and 234-236 each bind substrate; that span reads HDT. Asp235 functions as the Proton acceptor in the catalytic mechanism. Residue Thr257 participates in ATP binding. Asn294 contacts substrate. Gln302 serves as a coordination point for ATP. Cys352 and Cys369 are oxidised to a cystine. Residue Gly401 coordinates ATP.

It belongs to the rhamnulokinase family. It depends on Mg(2+) as a cofactor.

The enzyme catalyses L-rhamnulose + ATP = L-rhamnulose 1-phosphate + ADP + H(+). It functions in the pathway carbohydrate degradation; L-rhamnose degradation; glycerone phosphate from L-rhamnose: step 2/3. Its function is as follows. Involved in the catabolism of L-rhamnose (6-deoxy-L-mannose). Catalyzes the transfer of the gamma-phosphate group from ATP to the 1-hydroxyl group of L-rhamnulose to yield L-rhamnulose 1-phosphate. In Listeria monocytogenes serotype 4b (strain CLIP80459), this protein is Rhamnulokinase.